The sequence spans 417 residues: MYQPGILVRRKRVWKPWTVALITVALLLALAVLIGLLVYFLVYDEKTHYYQASFWIPSINYSSDLSKEQSKFRTGLKQKISNEIDVIFQRSSLKHHYVKSQVVNFRPSNDGVKADVLIKFQIPRKNAGTLKRQADNILQEKLQSSQSILKRDASLPYLREMNAAQAEHILNSDCGSGMEYPPIARIADGKPADKASWPWQSSLQVEGIHLCGASLIGSQWLVTSAHCFDNYKNPKLWTVSFGRTLSSPLTTRKVESIIVHENYASHKHDDDIAVVKLSSPVLFSENLHRVCLPDATFQVLPKSKVFVTGWGALKANGPFPNSLQEVEIEIISNDVCNQVNVYGGAISSGMICAGFLTGKLDACEGDSGGPLVISDNRNKWYLLGIVSWGIDCGKENKPGIYTRVTHYRDWIKSKTSI.

Over 1-21 (MYQPGILVRRKRVWKPWTVAL) the chain is Cytoplasmic. Residues 22-42 (ITVALLLALAVLIGLLVYFLV) traverse the membrane as a helical; Signal-anchor for type II membrane protein segment. Topologically, residues 43 to 417 (YDEKTHYYQA…RDWIKSKTSI (375 aa)) are extracellular. Positions 46–165 (KTHYYQASFW…PYLREMNAAQ (120 aa)) constitute an SEA domain. Residue Asn-60 is glycosylated (N-linked (GlcNAc...) asparagine). A Peptidase S1 domain is found at 186-416 (IADGKPADKA…YRDWIKSKTS (231 aa)). Cysteines 211 and 227 form a disulfide. Active-site charge relay system residues include His-226 and Asp-271. Intrachain disulfides connect Cys-336/Cys-352 and Cys-363/Cys-392. Catalysis depends on Ser-367, which acts as the Charge relay system.

Belongs to the peptidase S1 family.

It is found in the membrane. The sequence is that of Transmembrane protease serine 11G (Tmprss11g) from Mus musculus (Mouse).